Reading from the N-terminus, the 250-residue chain is Ditrans,polycis-undecaprenyl-diphosphate synthase ((2E,6E)-farnesyl-diphosphate specific) (250 aa).

Residue Asp20 is part of the active site. Mg(2+) is bound at residue Asp20. Substrate contacts are provided by residues 21-24 (GNGR), Trp25, Arg33, His37, and 65-67 (SSE). Asn68 serves as the catalytic Proton acceptor. Residues Trp69, Arg71, Arg188, and 194–196 (RIS) each bind substrate. Glu207 contacts Mg(2+).

The protein belongs to the UPP synthase family. As to quaternary structure, homodimer. The cofactor is Mg(2+).

It catalyses the reaction 8 isopentenyl diphosphate + (2E,6E)-farnesyl diphosphate = di-trans,octa-cis-undecaprenyl diphosphate + 8 diphosphate. Functionally, catalyzes the sequential condensation of isopentenyl diphosphate (IPP) with (2E,6E)-farnesyl diphosphate (E,E-FPP) to yield (2Z,6Z,10Z,14Z,18Z,22Z,26Z,30Z,34E,38E)-undecaprenyl diphosphate (di-trans,octa-cis-UPP). UPP is the precursor of glycosyl carrier lipid in the biosynthesis of bacterial cell wall polysaccharide components such as peptidoglycan and lipopolysaccharide. This is Ditrans,polycis-undecaprenyl-diphosphate synthase ((2E,6E)-farnesyl-diphosphate specific) from Vibrio cholerae serotype O1 (strain ATCC 39315 / El Tor Inaba N16961).